The primary structure comprises 200 residues: Recombination protein RecR (200 aa).

The segment at cysteine 58–cysteine 73 adopts a C4-type zinc-finger fold. Residues glycine 81–proline 176 form the Toprim domain.

The protein belongs to the RecR family.

Functionally, may play a role in DNA repair. It seems to be involved in an RecBC-independent recombinational process of DNA repair. It may act with RecF and RecO. The chain is Recombination protein RecR from Magnetococcus marinus (strain ATCC BAA-1437 / JCM 17883 / MC-1).